The chain runs to 229 residues: Urease accessory protein UreF (229 aa).

This sequence belongs to the UreF family. As to quaternary structure, ureD, UreF and UreG form a complex that acts as a GTP-hydrolysis-dependent molecular chaperone, activating the urease apoprotein by helping to assemble the nickel containing metallocenter of UreC. The UreE protein probably delivers the nickel.

The protein resides in the cytoplasm. In terms of biological role, required for maturation of urease via the functional incorporation of the urease nickel metallocenter. The polypeptide is Urease accessory protein UreF (Staphylococcus aureus (strain USA300)).